A 325-amino-acid chain; its full sequence is Homeobox protein Hox-A1a (325 aa).

The Antp-type hexapeptide motif lies at 187 to 192; that stretch reads TFDWMK. Disordered stretches follow at residues 194-215 and 264-325; these read KRNP…PNTV and RMKQ…YPSN. The homeobox DNA-binding region spans 212-271; the sequence is PNTVRTNFTTKQLTELEKEFHFNKYLTRARRVEIAAALQLNETQVKIWFQNRRMKQKKRE. The segment covering 285–300 has biased composition (basic and acidic residues); it reads SGERNQEKVEDGESEK. Residues 301–317 are compositionally biased toward low complexity; sequence SVSAPSTPSPTSSTVSS.

It belongs to the Antp homeobox family. Labial subfamily.

The protein resides in the nucleus. Sequence-specific transcription factor which is part of a developmental regulatory system that provides cells with specific positional identities on the anterior-posterior axis. The protein is Homeobox protein Hox-A1a (hoxa1a) of Takifugu rubripes (Japanese pufferfish).